Reading from the N-terminus, the 131-residue chain is Glutaredoxin arsenate reductase (131 aa).

Active-site nucleophile residues include Cys-8 and Cys-80. Intrachain disulfides connect Cys-8–Cys-80 and Cys-80–Cys-82.

It belongs to the low molecular weight phosphotyrosine protein phosphatase family. As to quaternary structure, homodimer.

It catalyses the reaction O-phospho-L-tyrosyl-[protein] + H2O = L-tyrosyl-[protein] + phosphate. The catalysed reaction is [glutaredoxin]-dithiol + arsenate + glutathione + H(+) = glutathionyl-S-S-[glutaredoxin] + arsenite + H2O. Functionally, reduces arsenate [As(V)] to arsenite [As(III)] using glutathione and glutaredoxin as sources of reducing equivalents. GrxA is the most effective electron donor in vivo compared to other glutaredoxins. Constitutes the major arsenate reductase compared to ArsI1 and ArsI2. Also shows weak phosphatase activity toward p-nitrophenyl phosphate. This Synechocystis sp. (strain ATCC 27184 / PCC 6803 / Kazusa) protein is Glutaredoxin arsenate reductase (arsC).